The sequence spans 155 residues: MTRKQKRLVVIAGGMSFILAAVLLVMFAFSQSVAYFYMPADLARTPVAPETRIRLGGLVGAGSVVRGAGSTVEFSVTDGSANAVKVKYTGILPDLFREGQGVVTEGMFAAGSNVFIADTVLAKHDETYMPKEVADRLKSQGLWQEGKGQEAKATP.

The Cytoplasmic segment spans residues 1 to 7; it reads MTRKQKR. The chain crosses the membrane as a helical; Signal-anchor for type II membrane protein span at residues 8–28; sequence LVVIAGGMSFILAAVLLVMFA. Residues 29–155 lie on the Periplasmic side of the membrane; sequence FSQSVAYFYM…GKGQEAKATP (127 aa). 2 residues coordinate heme: histidine 124 and tyrosine 128.

The protein belongs to the CcmE/CycJ family.

It localises to the cell inner membrane. In terms of biological role, heme chaperone required for the biogenesis of c-type cytochromes. Transiently binds heme delivered by CcmC and transfers the heme to apo-cytochromes in a process facilitated by CcmF and CcmH. In Rhizobium etli (strain ATCC 51251 / DSM 11541 / JCM 21823 / NBRC 15573 / CFN 42), this protein is Cytochrome c-type biogenesis protein CcmE.